A 777-amino-acid chain; its full sequence is Elongation factor G, mitochondrial (777 aa).

The 305-residue stretch at 34–338 (LRQRNVGISA…GMCAYLPNPM (305 aa)) folds into the tr-type G domain. Residues 43–50 (AHIDSGKT), 136–140 (DTPGH), and 190–193 (NKMD) each bind GTP.

Belongs to the TRAFAC class translation factor GTPase superfamily. Classic translation factor GTPase family. EF-G/EF-2 subfamily.

It is found in the mitochondrion. It functions in the pathway protein biosynthesis; polypeptide chain elongation. Functionally, mitochondrial GTPase that catalyzes the GTP-dependent ribosomal translocation step during translation elongation. During this step, the ribosome changes from the pre-translocational (PRE) to the post-translocational (POST) state as the newly formed A-site-bound peptidyl-tRNA and P-site-bound deacylated tRNA move to the P and E sites, respectively. Catalyzes the coordinated movement of the two tRNA molecules, the mRNA and conformational changes in the ribosome. This Malassezia globosa (strain ATCC MYA-4612 / CBS 7966) (Dandruff-associated fungus) protein is Elongation factor G, mitochondrial.